A 291-amino-acid chain; its full sequence is F-box/kelch-repeat protein At5g38670 (291 aa).

Positions 5–51 (TNPNPSLPDDLILSCVARVSRLYYPALSLVSKSFRSLIASPELYKTR) constitute an F-box domain. Kelch repeat units lie at residues 46-91 (ELYK…VLDE), 92-140 (KIYV…RFDG), 142-187 (LHLV…WYTI), and 189-232 (KGDI…YGGK).

The sequence is that of F-box/kelch-repeat protein At5g38670 from Arabidopsis thaliana (Mouse-ear cress).